Consider the following 152-residue polypeptide: UPF0178 protein YE1167 (152 aa).

Belongs to the UPF0178 family.

This Yersinia enterocolitica serotype O:8 / biotype 1B (strain NCTC 13174 / 8081) protein is UPF0178 protein YE1167.